We begin with the raw amino-acid sequence, 344 residues long: tRNA N6-adenosine threonylcarbamoyltransferase (344 aa).

2 residues coordinate Fe cation: His111 and His115. Substrate-binding positions include 134–138 (LVSGG), Asp167, Gly180, Asp184, and Asn277. Asp305 lines the Fe cation pocket.

It belongs to the KAE1 / TsaD family. Fe(2+) is required as a cofactor.

It localises to the cytoplasm. It catalyses the reaction L-threonylcarbamoyladenylate + adenosine(37) in tRNA = N(6)-L-threonylcarbamoyladenosine(37) in tRNA + AMP + H(+). In terms of biological role, required for the formation of a threonylcarbamoyl group on adenosine at position 37 (t(6)A37) in tRNAs that read codons beginning with adenine. Is involved in the transfer of the threonylcarbamoyl moiety of threonylcarbamoyl-AMP (TC-AMP) to the N6 group of A37, together with TsaE and TsaB. TsaD likely plays a direct catalytic role in this reaction. The chain is tRNA N6-adenosine threonylcarbamoyltransferase from Microcystis aeruginosa (strain NIES-843 / IAM M-2473).